Here is a 432-residue protein sequence, read N- to C-terminus: Adenylosuccinate synthetase (432 aa).

GTP contacts are provided by residues 13–19 (GDEGKGK) and 41–43 (GHT). The Proton acceptor role is filled by aspartate 14. Positions 14 and 41 each coordinate Mg(2+). IMP contacts are provided by residues 14–17 (DEGK), 39–42 (NAGH), threonine 130, arginine 144, glutamine 225, threonine 240, and arginine 304. The active-site Proton donor is the histidine 42. 300–306 (ATTGRRR) is a substrate binding site. GTP contacts are provided by residues arginine 306, 332–334 (KLD), and 415–417 (STG).

The protein belongs to the adenylosuccinate synthetase family. In terms of assembly, homodimer. It depends on Mg(2+) as a cofactor.

It localises to the cytoplasm. The catalysed reaction is IMP + L-aspartate + GTP = N(6)-(1,2-dicarboxyethyl)-AMP + GDP + phosphate + 2 H(+). It functions in the pathway purine metabolism; AMP biosynthesis via de novo pathway; AMP from IMP: step 1/2. Functionally, plays an important role in the de novo pathway of purine nucleotide biosynthesis. Catalyzes the first committed step in the biosynthesis of AMP from IMP. This Salmonella typhi protein is Adenylosuccinate synthetase.